The chain runs to 404 residues: Probable tRNA sulfurtransferase (404 aa).

Residues 60–165 (TAVAESLKQV…EEAAYLSYET (106 aa)) form the THUMP domain. ATP-binding positions include 183–184 (ML), 208–209 (HF), arginine 265, glycine 287, and glutamine 296.

This sequence belongs to the ThiI family.

It localises to the cytoplasm. It carries out the reaction [ThiI sulfur-carrier protein]-S-sulfanyl-L-cysteine + a uridine in tRNA + 2 reduced [2Fe-2S]-[ferredoxin] + ATP + H(+) = [ThiI sulfur-carrier protein]-L-cysteine + a 4-thiouridine in tRNA + 2 oxidized [2Fe-2S]-[ferredoxin] + AMP + diphosphate. The enzyme catalyses [ThiS sulfur-carrier protein]-C-terminal Gly-Gly-AMP + S-sulfanyl-L-cysteinyl-[cysteine desulfurase] + AH2 = [ThiS sulfur-carrier protein]-C-terminal-Gly-aminoethanethioate + L-cysteinyl-[cysteine desulfurase] + A + AMP + 2 H(+). Its pathway is cofactor biosynthesis; thiamine diphosphate biosynthesis. In terms of biological role, catalyzes the ATP-dependent transfer of a sulfur to tRNA to produce 4-thiouridine in position 8 of tRNAs, which functions as a near-UV photosensor. Also catalyzes the transfer of sulfur to the sulfur carrier protein ThiS, forming ThiS-thiocarboxylate. This is a step in the synthesis of thiazole, in the thiamine biosynthesis pathway. The sulfur is donated as persulfide by IscS. The sequence is that of Probable tRNA sulfurtransferase from Streptococcus pneumoniae (strain 70585).